Consider the following 126-residue polypeptide: RxLR effector protein BLR31 (126 aa).

A signal peptide spans Met-1–Ala-22. The RxLR-dEER motif lies at Arg-44 to Arg-58.

It belongs to the RxLR effector family.

It is found in the secreted. It localises to the host cell. Secreted effector that triggers a hypersensitive response (HR) in 3 Lactuca saligna accessions (CGN05947, CGN05310, CGN05304). In Bremia lactucae (Lettuce downy mildew), this protein is RxLR effector protein BLR31.